The chain runs to 692 residues: Small conductance calcium-activated potassium channel-like protein 3 (692 aa).

A helical membrane pass occupies residues 270–290 (SLYLALFGVILMLVESEITAE). The chain crosses the membrane as a helical span at residues 313 to 333 (TIALLYHIILYHLNDIVLELV). A helical membrane pass occupies residues 349–369 (VIQFCIEFICCGICPLPGSGE). Residues 401–421 (VILSCFMLCRSYLFARFMVLH) traverse the membrane as a helical segment. Residues 455–475 (PVLFLTTFTFIFWIIMSWMFV) form a helical membrane-spanning segment. An intramembrane region (pore-forming) is located at residues 492–512 (YSNSLWFIAITFMLNGYGDIV). The chain crosses the membrane as a helical span at residues 520–540 (FIAIFVGVVGAVISSILIAVI). Residues 667–683 (HSTPNVPHLQGLTSSPV) show a composition bias toward polar residues. A disordered region spans residues 667 to 692 (HSTPNVPHLQGLTSSPVPSDRYDNRF).

It belongs to the potassium channel KCNN family. SK subfamily. Heterooligomer.

It is found in the membrane. Forms a voltage-independent potassium channel activated by intracellular calcium. The polypeptide is Small conductance calcium-activated potassium channel-like protein 3 (kcnl-3) (Caenorhabditis elegans).